The chain runs to 340 residues: Phospho-N-acetylmuramoyl-pentapeptide-transferase (340 aa).

10 helical membrane passes run 3-23, 53-73, 79-99, 119-139, 144-164, 176-196, 200-220, 227-247, 250-270, and 315-335; these read MSLI…PHFI, GGTV…FHVF, AYGA…IGFL, MALQ…PSGT, IGGL…FWIV, IDGL…IIAF, ELAI…FFVF, VFMG…ISIA, VEWT…SVML, and VDAF…WMVL.

Belongs to the glycosyltransferase 4 family. MraY subfamily. Requires Mg(2+) as cofactor.

Its subcellular location is the cell membrane. The catalysed reaction is UDP-N-acetyl-alpha-D-muramoyl-L-alanyl-gamma-D-glutamyl-L-lysyl-D-alanyl-D-alanine + di-trans,octa-cis-undecaprenyl phosphate = Mur2Ac(oyl-L-Ala-gamma-D-Glu-L-Lys-D-Ala-D-Ala)-di-trans,octa-cis-undecaprenyl diphosphate + UMP. It participates in cell wall biogenesis; peptidoglycan biosynthesis. Its function is as follows. Catalyzes the initial step of the lipid cycle reactions in the biosynthesis of the cell wall peptidoglycan: transfers peptidoglycan precursor phospho-MurNAc-pentapeptide from UDP-MurNAc-pentapeptide onto the lipid carrier undecaprenyl phosphate, yielding undecaprenyl-pyrophosphoryl-MurNAc-pentapeptide, known as lipid I. This Streptococcus thermophilus (strain ATCC BAA-250 / LMG 18311) protein is Phospho-N-acetylmuramoyl-pentapeptide-transferase.